Here is a 337-residue protein sequence, read N- to C-terminus: tRNA N6-adenosine threonylcarbamoyltransferase (337 aa).

The Fe cation site is built by His111 and His115. Substrate contacts are provided by residues 134 to 138, Asp167, Gly180, and Asn272; that span reads LVSGG. Asp300 contributes to the Fe cation binding site.

Belongs to the KAE1 / TsaD family. Fe(2+) is required as a cofactor.

The protein resides in the cytoplasm. It catalyses the reaction L-threonylcarbamoyladenylate + adenosine(37) in tRNA = N(6)-L-threonylcarbamoyladenosine(37) in tRNA + AMP + H(+). In terms of biological role, required for the formation of a threonylcarbamoyl group on adenosine at position 37 (t(6)A37) in tRNAs that read codons beginning with adenine. Is involved in the transfer of the threonylcarbamoyl moiety of threonylcarbamoyl-AMP (TC-AMP) to the N6 group of A37, together with TsaE and TsaB. TsaD likely plays a direct catalytic role in this reaction. This chain is tRNA N6-adenosine threonylcarbamoyltransferase, found in Aeromonas salmonicida (strain A449).